We begin with the raw amino-acid sequence, 255 residues long: 4-hydroxy-tetrahydrodipicolinate reductase (255 aa).

NAD(+) contacts are provided by residues 9 to 14 (GYRGKM), 89 to 91 (GTT), and 115 to 118 (APNF). The active-site Proton donor/acceptor is His-145. His-146 lines the (S)-2,3,4,5-tetrahydrodipicolinate pocket. Lys-149 functions as the Proton donor in the catalytic mechanism. 155-156 (GT) lines the (S)-2,3,4,5-tetrahydrodipicolinate pocket.

It belongs to the DapB family.

Its subcellular location is the cytoplasm. It carries out the reaction (S)-2,3,4,5-tetrahydrodipicolinate + NAD(+) + H2O = (2S,4S)-4-hydroxy-2,3,4,5-tetrahydrodipicolinate + NADH + H(+). The catalysed reaction is (S)-2,3,4,5-tetrahydrodipicolinate + NADP(+) + H2O = (2S,4S)-4-hydroxy-2,3,4,5-tetrahydrodipicolinate + NADPH + H(+). It participates in amino-acid biosynthesis; L-lysine biosynthesis via DAP pathway; (S)-tetrahydrodipicolinate from L-aspartate: step 4/4. Catalyzes the conversion of 4-hydroxy-tetrahydrodipicolinate (HTPA) to tetrahydrodipicolinate. This chain is 4-hydroxy-tetrahydrodipicolinate reductase, found in Streptococcus uberis (strain ATCC BAA-854 / 0140J).